The chain runs to 429 residues: Adenylosuccinate synthetase (429 aa).

Residues 12–18 (GDEGKGK) and 40–42 (GHT) each bind GTP. Residue Asp13 is the Proton acceptor of the active site. The Mg(2+) site is built by Asp13 and Gly40. Residues 13–16 (DEGK), 38–41 (NAGH), Thr128, Arg142, Gln224, Thr239, and Arg303 contribute to the IMP site. Catalysis depends on His41, which acts as the Proton donor. Substrate is bound at residue 299–305 (VTTGRPR). GTP-binding positions include Arg305, 331-333 (LLD), and 413-415 (SVG).

It belongs to the adenylosuccinate synthetase family. In terms of assembly, homodimer. The cofactor is Mg(2+).

Its subcellular location is the cytoplasm. The enzyme catalyses IMP + L-aspartate + GTP = N(6)-(1,2-dicarboxyethyl)-AMP + GDP + phosphate + 2 H(+). The protein operates within purine metabolism; AMP biosynthesis via de novo pathway; AMP from IMP: step 1/2. In terms of biological role, plays an important role in the de novo pathway of purine nucleotide biosynthesis. Catalyzes the first committed step in the biosynthesis of AMP from IMP. This Clostridioides difficile (strain 630) (Peptoclostridium difficile) protein is Adenylosuccinate synthetase.